Consider the following 1238-residue polypeptide: MPHPVTIGKRTRMSFSKIKEIADVPNLIEIQVDSYEWFLKEGLKEVFDDISPIEDYTGNLILEFVDYSLDDKPKYDIEECKERDATYCAPLKVKVRLINKETGEIKEQEVFMGDFPLMTERGTFVINGAERVIVSQLVRSPGVYYAEERDKTGKRLISSTVIPNRGAWLEYETDSNDVISVRVDRTRKQPVTVLLRALGIGTDAEIIDLLGEDERLSATLEKDNTKTVEEGLVEIYKKLRPGEPPTVESASSLLNALFFDPKRYDLAKVGRYKFNKKLALCYRIMNKISAEDIINPETGEVFVKAGEKISYDLAKAIQNAGINVVNLLMDDDKKVRVIGNNFVDIKSHIDFDIDDLNIKEKVHYPTLKEILDGYSDEEEIKEAIKSRIKELIPKHILLDDIIASISYEFNIFYNIGNIDDIDHLGNRRIRSVGELLQNQVRIGLSRMERVIKERMTVQDMEAITPQALVNIRPVSAAIKEFFGSSQLSQFMDQTNPLSELTHKRRLSALGPGGLSRERAGFEVRDVHHSHYGRMCPIETPEGPNIGLINSLGTYAKINEFGFIESPYRKFDKETSTVTDEIHYLTADEEDLFVRAQANEPLTEDGKFVNHRVVCRTVNGAVEMVPESRVDYMDISPKQVVSVATAMIPFLENDDANRALMGANMQRQAVPLVRREAPIIGTGIEYRAAKDSGAVVVARNSGIAERVTADEIIIKREDGNRDRYNLLKFKRSNSGTCINQTPIINKGDQIIKGDVIADGPATDLGEVALGRNCLIAFMTWEGYNYEDAILINERLVKEDRLSTIHIEEYECEARDTKLGPEEITRDIPNVGDSAIKNLDDRGIIRIGAEVDSGDILVGKVTPKGETELTAEERLLRAIFGEKAREVRDTSLKVPHGESGIIVDVKVFTRENGDDLSPGVNELVRCYIAKKRKIKVGDKMAGRHGNKGVISRVLPEEDMPFMENGTPLDIILNPQGIPSRMNIGQVLEVHLGLAAKTLGWYVATSVFDGANEYDIMDALEEAGYPRDGKLTLYDGRTGESFDNRITVGYMYYLKLHHLVDEKLHARSTGPYSLVTQQPLGGKAQFGGQRFGEMEVWALEAYGAAHILQEILTVKSDDVVGRVRTYEAIVKGENIPEPGIPESFKVLIKELQSLCLDVKVLTDEDQEIEVRESVDEDDTIGEFELDVVNHMGEVEESNIIEEIEDDFAENAEDEDIENLEEFTEDDLFEEEIDFDSDDFDM.

The protein belongs to the RNA polymerase beta chain family. The RNAP catalytic core consists of 2 alpha, 1 beta, 1 beta' and 1 omega subunit. When a sigma factor is associated with the core the holoenzyme is formed, which can initiate transcription.

It catalyses the reaction RNA(n) + a ribonucleoside 5'-triphosphate = RNA(n+1) + diphosphate. In terms of biological role, DNA-dependent RNA polymerase catalyzes the transcription of DNA into RNA using the four ribonucleoside triphosphates as substrates. The sequence is that of DNA-directed RNA polymerase subunit beta from Clostridioides difficile (strain 630) (Peptoclostridium difficile).